Reading from the N-terminus, the 545-residue chain is Membrane protein insertase YidC (545 aa).

The next 6 helical transmembrane spans lie at 10–30 (AVYLSLFFIGIFMLLDDFLFS), 319–339 (LLYFLQVPMQLIMQIFYNVIP), 341–361 (WGLSIMFLTIVVRILIFPLTF), 407–427 (IGGCFPILLQLPVFFALYGLV), 467–487 (ILPFIMMITQLLSTIVSSNVS), and 502–522 (MPIMFFFILYDMPSGLLIYWI).

This sequence belongs to the OXA1/ALB3/YidC family. Type 1 subfamily. In terms of assembly, interacts with the Sec translocase complex via SecD. Specifically interacts with transmembrane segments of nascent integral membrane proteins during membrane integration.

It is found in the cell inner membrane. Its function is as follows. Required for the insertion and/or proper folding and/or complex formation of integral membrane proteins into the membrane. Involved in integration of membrane proteins that insert both dependently and independently of the Sec translocase complex, as well as at least some lipoproteins. Aids folding of multispanning membrane proteins. This is Membrane protein insertase YidC from Borrelia duttonii (strain Ly).